The sequence spans 805 residues: H(+)/Cl(-) exchange transporter 7 (805 aa).

Residues 1–49 are disordered; the sequence is MANVSKKVSWSGRDRDDEEAAPLLRRTARPGGGTPLLNGAGPGAARQSP. The Cytoplasmic portion of the chain corresponds to 1-126; the sequence is MANVSKKVSW…TAFRTVEIKR (126 aa). A phosphoserine mark is found at Ser9 and Ser60. Transmembrane regions (helical) follow at residues 127–159 and 174–197; these read WVICALIGILTGLVACFIDIVVENLAGLKYRVI and FSLLLWATLNAAFVLVGSVIVAFI. Positions 203 to 207 match the Selectivity filter part_1 motif; the sequence is GSGIP. A chloride-binding site is contributed by Ser204. Positions 206–213 form an intramembrane region, helical; that stretch reads IPQIKCFL. The next 2 membrane-spanning stretches (helical) occupy residues 223–241 and 247–264; these read RLKTLVIKVSGVILSVVGG and EGPMIHSGSVIAAGISQG. The Selectivity filter part_2 motif lies at 245–249; that stretch reads GKEGP. 2 intramembrane regions (helical) span residues 288–300 and 304–312; these read FVSAGAAAGVSAA and PVGGVLFSL. The next 5 membrane-spanning stretches (helical) occupy residues 322 to 341, 375 to 405, 410 to 432, 487 to 507, and 512 to 535; these read FLTWRIFFASMISTFTLNFV, IPVFIAMGVVGGVLGAVFNALNYWLTMFRIR, PCLQVIEAVLVAAVTATVAFVLI, PLTLGLFTLVYFFLACWTYGL, and GVFIPSLLIGAAWGRLFGISLSYL. The Selectivity filter part_3 signature appears at 512–516; the sequence is GVFIP. A chloride-binding site is contributed by Phe514. The segment at residues 545-559 is an intramembrane region (helical); sequence GKYALMGAAAQLGGI. Residues 560-562 constitute an intramembrane region (note=Loop between two helices); it reads VRM. The segment at residues 563-574 is an intramembrane region (helical); it reads TLSLTVIMMEAT. An intramembrane region (note=Loop between two helices) is located at residues 575 to 578; that stretch reads SNVT. The chain crosses the membrane as a helical span at residues 579-597; the sequence is YGFPIMLVLMTAKIVGDVF. The Cytoplasmic portion of the chain corresponds to 598 to 805; it reads IEGLYDMHIQ…GLEELSLAQT (208 aa). Tyr602 is a chloride binding site. 2 CBS domains span residues 631–695 and 741–799; these read MSTP…VFVE and MNPS…GLEE. ATP-binding positions include 658-660 and 783-786; these read HNG and TRKD. Ser801 bears the Phosphoserine mark.

It belongs to the chloride channel (TC 2.A.49) family. ClC-7/CLCN7 subfamily. As to quaternary structure, chloride channel 7 are heteromers of alpha (CLCN7) and beta (OSTM1) subunits. In terms of tissue distribution, brain and kidney.

It localises to the lysosome membrane. The enzyme catalyses 2 chloride(in) + H(+)(out) = 2 chloride(out) + H(+)(in). In terms of biological role, slowly voltage-gated channel mediating the exchange of chloride ions against protons. Functions as antiporter and contributes to the acidification of the lysosome lumen and may be involved in maintaining lysosomal pH. The CLC channel family contains both chloride channels and proton-coupled anion transporters that exchange chloride or another anion for protons. The presence of conserved gating glutamate residues is typical for family members that function as antiporters. In Homo sapiens (Human), this protein is H(+)/Cl(-) exchange transporter 7.